The sequence spans 1343 residues: DNA-directed RNA polymerase subunit beta (1343 aa).

This sequence belongs to the RNA polymerase beta chain family. As to quaternary structure, the RNAP catalytic core consists of 2 alpha, 1 beta, 1 beta' and 1 omega subunit. When a sigma factor is associated with the core the holoenzyme is formed, which can initiate transcription.

It carries out the reaction RNA(n) + a ribonucleoside 5'-triphosphate = RNA(n+1) + diphosphate. Its function is as follows. DNA-dependent RNA polymerase catalyzes the transcription of DNA into RNA using the four ribonucleoside triphosphates as substrates. In Shewanella frigidimarina (strain NCIMB 400), this protein is DNA-directed RNA polymerase subunit beta.